The sequence spans 271 residues: 4-hydroxy-tetrahydrodipicolinate reductase (271 aa).

NAD(+) is bound by residues 10–15 (GAGGRM), Glu-36, 100–102 (GTT), and 124–127 (SGNM). The Proton donor/acceptor role is filled by His-157. His-158 lines the (S)-2,3,4,5-tetrahydrodipicolinate pocket. The Proton donor role is filled by Lys-161. 167 to 168 (GT) contacts (S)-2,3,4,5-tetrahydrodipicolinate.

This sequence belongs to the DapB family.

It is found in the cytoplasm. It catalyses the reaction (S)-2,3,4,5-tetrahydrodipicolinate + NAD(+) + H2O = (2S,4S)-4-hydroxy-2,3,4,5-tetrahydrodipicolinate + NADH + H(+). It carries out the reaction (S)-2,3,4,5-tetrahydrodipicolinate + NADP(+) + H2O = (2S,4S)-4-hydroxy-2,3,4,5-tetrahydrodipicolinate + NADPH + H(+). It functions in the pathway amino-acid biosynthesis; L-lysine biosynthesis via DAP pathway; (S)-tetrahydrodipicolinate from L-aspartate: step 4/4. Catalyzes the conversion of 4-hydroxy-tetrahydrodipicolinate (HTPA) to tetrahydrodipicolinate. The protein is 4-hydroxy-tetrahydrodipicolinate reductase of Bradyrhizobium diazoefficiens (strain JCM 10833 / BCRC 13528 / IAM 13628 / NBRC 14792 / USDA 110).